The primary structure comprises 2602 residues: MATTLLLFGPQAASMSKQSITQLQVALRDQEWAFDALSNVQPIIQRASTSISGLDQISLDERLADLTRWLKHGPKDQEELAEIPNIMLAPLTTLSHLVQYRRYIERHYPNESDAHAALLQQKPVATLGFCNGLLAAFATTSSATLNDWERYAAVATRLALLVGAVIDAADELQPHGPAASYGVSWRDIDGARQLEQILSPFPGDAYVSVWYDRSRATVTVSKHLVRTVLHLVEAAGMAVVPVRLRGRYHSRQHAEVAEALIRLCDAEPDLLALPDARNLCLPTYSNVGHGEVVREGRLHEIALQAMLVQQCDWYSTLSGITDESQVQVVCLSEVSTLPPSLTFKLKPQMEYFAPLEEKTAPKDNFSGRADGGSQFSFSMLENSTSPPSPAATSSNSHCEYSVDPRDIAIVGMSVKVAGADDVVEYESILRGGVSQHQQVRKNRVPFGYNSFRPEEPGHKWYGNFVRDVDAFDHKFFRKSSRESAAMDPQQRLVLQAAYQAVEQSGYYASGTEPDQHIGVYLGTCATDYEQNANCHAPGAFTVTGLLRGFIAGRISHFFGWTGPAMTYDTACSGSAVAIHSAVQALVSGECSAALAGGVNTIGNEVWFQNLAGAQFLSPTGQCKPFDDAADGYCRGEGIACVVLKPMAKAIADGNQIFGRIASSAVHQSVNCTPLFVPNVPSLSRLFGDVMRQARLEPHDISFVEAHGTGTPVGDPVEYESIRAILGGPLRDKPLSLGSAKGLVGHTESTSGVVSLVKVLLMMQSGFIPPQASYSKLSHRIAPSASAMIQVSTTLQPWTDSYKAALINNYGASGSNAAMVVTQGPAQTARSPRGEADGAHLPFWIPGFDSARIAAYCARLSAFIEANRSTIHLADIAYNISRQSNRTLSHALLFRCNSIDSLVGQLSSAAAPQTVQVKPSRPVILCFGGQMSTFVGLNREIYDSSPILRDHLSQCDAAIRALGFGSIFPSIFATIPIEDTVLLQTVLFSFQYACAKSWIDCGVRPTAVVGHSFGEITALCIAEVLSLDDTIKLVTRRAKVVRDSWGADRGVMMAVEGEVDQVERLLEEANKDLDTHSPASIACYNGLRNFTLAGSTLAMERVALALSSSAYASIRGKKLNVTNAFHSALVDPLLQELEQAGSDLTFNKARIKVERATKESTTGEPCAPKFVGEHMRNPVFFRQAAQRLARDNPSAVWIEAGSATKITAMARRSLDSNAESHFQGITVTGEDGLDKLTEATLSLWKQGLNVAFWAHHGPQATRDHQPLLLPPYQFEKSRHWLDVKAPPVMLADTAQGDNGPLFGLLTFVGFQDAEERRARFKINTESERYKSLVIPHIIARTAPICPATLEYSLAIQALLTLRDHKHFESRDMHPVIRDMRNDAPLCLNSDQSTWLDLEANKTSPRSLVWKVFTAPVSRQLDSHNDSDETLCAQGKLDLLSSSETTEFAQYEQLATYDACVSLLQDDDGDVSGLQGRSVYRSLADVVDYGVHYQKVRRVSGRNSESAGIVRGASGGNWLSDLPIIDSFSQVAGVWVNCLADRTPGSDDLFLATGCETIMTSPTFLHADRGGKSWHVWAKHHRESERSYRTDVLVFDATNGQLADVFLGIAYTRIPRHSMTRLLSKLSEPSALQAQAALPSSTGHEGLTAKTASSQRLGQDTLKQTVGQIIASLSGVEAAQITDESALADIGIDSLAGMELARDIESVLGCKLDLEELLFTHDTFGAFVRYISKVVNGEDDLGTPSHSDNDSHVTGTTATPNSSSASSDTHHGNSKLQIAVAQSSQADASSSSPLPPQHVISSFEQVKLSTDQRIREEKADNTDDIIVSRSNLLCVALVVEAFEQLGCPLRGVPAGEALKRIQHAPQHARLVDWLYRFLEDEARLINTEGTLILRTSNGAPNKTSQAIFQDLEHANDRWIESHRLANYAGKNLADVVSGKKEGIHVLFGSAEGRELVRGLYSGLPFNCLFYKQVRDTISLIVEKVKDDFQGPLRILEMGAGTGGTTQVLAPFLATLDIPVEYTMTDLSPYMVAQAQRSFGTKYPFMHFAVHDIEKPPAESLLGTQHIIVASNAVHATANLADSAANIRSTLRPDGILLLVEMTESLPFVDIVFGLLEGWWRFADGREHAIVPAEQWEARLRDAGYGHVDWTDGVFSENRLQKVILAMASELPDGLPVSSGVPEPVQPALEVTTTVAREANAEAYVTQYSADFTYDGESSGNIEAHEAQDSRIVVVTGATGSLGSHMVASFAESPSVTSVVCINRRNSGKATALERQQEAFTSRGITLSPDAFGKLRVFATDTAQPQLGLPLEEYEWLVTHATHIVHNAWPMSASRPIQAFQPQFKTMSRLLDLAAAIAQQSTSRFVVFQLISSIGVVGSAPMIDTRVPERRVPVSYTLPNGYCEAKWVCEQLLNETLHQYPERFRAMVVRPGQIAGSSVNGVWNPVEHFPALVRSSQALRAFPALGGTLQWIPVDVAAGTVADLALNQQAGEPVYHIDNPVGQSWSNMVPILADELNIPGERIIPLGEWVRKVKRSSLLETENPASRLPDFFEQHFERMSCGGLILDVALATKRSGTLAAQGAVSADTARKYIQTWKDMKFLDRY.

Catalysis depends on Cys-130, which acts as the Nucleophile; for transacylase activity. His-249 functions as the Proton donor/acceptor; for transacylase activity in the catalytic mechanism. The tract at residues 379 to 398 (MLENSTSPPSPAATSSNSHC) is disordered. Over residues 382–396 (NSTSPPSPAATSSNS) the composition is skewed to low complexity. In terms of domain architecture, Ketosynthase family 3 (KS3) spans 404–822 (PRDIAIVGMS…GSNAAMVVTQ (419 aa)). Residues Cys-571, His-706, and His-745 each act as for beta-ketoacyl synthase activity in the active site. A malonyl-CoA:ACP transacylase (MAT) region spans residues 926 to 1216 (FGGQMSTFVG…AMARRSLDSN (291 aa)). Residues 1298-1442 (GPLFGLLTFV…GKLDLLSSSE (145 aa)) form an N-terminal hotdog fold region. A PKS/mFAS DH domain is found at 1298–1618 (GPLFGLLTFV…YTRIPRHSMT (321 aa)). The tract at residues 1331 to 1616 (LVIPHIIART…IAYTRIPRHS (286 aa)) is product template (PT) domain. His-1335 serves as the catalytic Proton acceptor; for dehydratase activity. Residues 1467–1618 (GDVSGLQGRS…YTRIPRHSMT (152 aa)) are C-terminal hotdog fold. Asp-1524 serves as the catalytic Proton donor; for dehydratase activity. Residues 1658–1733 (DTLKQTVGQI…AFVRYISKVV (76 aa)) enclose the Carrier domain. O-(pantetheine 4'-phosphoryl)serine is present on Ser-1692. Positions 1737–1772 (DDLGTPSHSDNDSHVTGTTATPNSSSASSDTHHGNS) are disordered. Residues 1752–1765 (TGTTATPNSSSASS) show a composition bias toward low complexity. Positions 1979-2150 (VEKVKDDFQG…GYGHVDWTDG (172 aa)) are methyltransferase domain. The tract at residues 2229–2530 (IVVVTGATGS…IPLGEWVRKV (302 aa)) is NADPH-binding domain.

Requires pantetheine 4'-phosphate as cofactor.

It functions in the pathway mycotoxin biosynthesis. Non-reducing polyketide synthase; part of the satratoxin SC1 cluster involved in the biosynthesis of satratoxins, trichothecene mycotoxins that are associated with human food poisonings. Satratoxins are suggested to be made by products of multiple gene clusters (SC1, SC2 and SC3) that encode 21 proteins in all, including polyketide synthases, acetyltransferases, and other enzymes expected to modify the trichothecene skeleton. SC1 encodes 10 proteins, SAT1 to SAT10. The largest are SAT8, which encodes a putative polyketide synthase (PKS) with a conventional non-reducing architecture, and SAT10, a putative protein containing four ankyrin repeats and thus may be involved in protein scaffolding. The putative short-chain reductase SAT3 may assist the PKS in some capacity. SAT6 contains a secretory lipase domain and acts probably as a trichothecene esterase. SAT5 encodes a putative acetyltransferase, and so, with SAT6, may affect endogenous protection from toxicity. The probable transcription factor SAT9 may regulate the expression of the SC1 cluster. SC2 encodes proteins SAT11 to SAT16, the largest of which encodes the putative reducing PKS SAT13. SAT11 is a cytochrome P450 monooxygenase, while SAT14 and SAT16 are probable acetyltransferases. The SC2 cluster may be regulated by the transcription factor SAT15. SC3 is a small cluster that encodes 5 proteins, SAT17 to SAT21. SAT21 is a putative MFS-type transporter which may have a role in exporting secondary metabolites. The four other proteins putatively encoded in SC3 include the taurine hydroxylase-like protein SAT17, the O-methyltransferase SAT18, the acetyltransferase SAT19, and the Cys6-type zinc finger SAT20, the latter being probably involved in regulation of SC3 expression. This chain is Non-reducing polyketide synthase SAT8, found in Stachybotrys chartarum (strain CBS 109288 / IBT 7711) (Toxic black mold).